The sequence spans 320 residues: Cytochrome f (320 aa).

Residues 1–35 (MQTRNTFSWIREEITRSISVSLMIYIITWASISSA) form the signal peptide. The heme site is built by Tyr-36, Cys-56, Cys-59, and His-60. Residues 286-306 (VQGLLFFLGSVVLAQIFLVLK) form a helical membrane-spanning segment.

It belongs to the cytochrome f family. In terms of assembly, the 4 large subunits of the cytochrome b6-f complex are cytochrome b6, subunit IV (17 kDa polypeptide, petD), cytochrome f and the Rieske protein, while the 4 small subunits are PetG, PetL, PetM and PetN. The complex functions as a dimer. It depends on heme as a cofactor.

The protein localises to the plastid. The protein resides in the chloroplast thylakoid membrane. Its function is as follows. Component of the cytochrome b6-f complex, which mediates electron transfer between photosystem II (PSII) and photosystem I (PSI), cyclic electron flow around PSI, and state transitions. This chain is Cytochrome f, found in Nasturtium officinale (Watercress).